The sequence spans 390 residues: Phosphopentomutase (390 aa).

Mn(2+)-binding residues include aspartate 11, aspartate 283, histidine 288, aspartate 324, histidine 325, and histidine 336.

It belongs to the phosphopentomutase family. Requires Mn(2+) as cofactor.

The protein resides in the cytoplasm. It catalyses the reaction 2-deoxy-alpha-D-ribose 1-phosphate = 2-deoxy-D-ribose 5-phosphate. It carries out the reaction alpha-D-ribose 1-phosphate = D-ribose 5-phosphate. It functions in the pathway carbohydrate degradation; 2-deoxy-D-ribose 1-phosphate degradation; D-glyceraldehyde 3-phosphate and acetaldehyde from 2-deoxy-alpha-D-ribose 1-phosphate: step 1/2. Isomerase that catalyzes the conversion of deoxy-ribose 1-phosphate (dRib-1-P) and ribose 1-phosphate (Rib-1-P) to deoxy-ribose 5-phosphate (dRib-5-P) and ribose 5-phosphate (Rib-5-P), respectively. The chain is Phosphopentomutase from Clostridium acetobutylicum (strain ATCC 824 / DSM 792 / JCM 1419 / IAM 19013 / LMG 5710 / NBRC 13948 / NRRL B-527 / VKM B-1787 / 2291 / W).